A 335-amino-acid chain; its full sequence is Probable cytosolic iron-sulfur protein assembly protein Ciao1 (335 aa).

WD repeat units follow at residues glycine 12–lysine 51, glycine 57–asparagine 96, glycine 101–cysteine 140, proline 146–aspartate 185, serine 192–glycine 231, glutamine 250–glutamate 289, and alanine 301–glutamate 335.

This sequence belongs to the WD repeat CIA1 family.

Functionally, essential component of the cytosolic iron-sulfur (Fe/S) protein assembly machinery. Required for the maturation of extramitochondrial Fe/S proteins. The protein is Probable cytosolic iron-sulfur protein assembly protein Ciao1 of Drosophila sechellia (Fruit fly).